The primary structure comprises 485 residues: GTPase Der (485 aa).

EngA-type G domains are found at residues 3–167 (PTIA…PEPE) and 176–349 (PVFA…NAAM). Residues 9–16 (GRPNVGKS), 56–60 (DTGGF), 119–122 (NKGE), 182–189 (GRPNVGKS), 229–233 (DTAGV), and 294–297 (NKWD) each bind GTP. In terms of domain architecture, KH-like spans 350-434 (IKMPTPKITR…PLRIQYNVSE (85 aa)). The tract at residues 435–485 (NPYENAEDKPKKKPLRRVSLSNRIEKREGRKEEKNRFKKKTKVSVKKQFSK) is disordered. The span at 457–469 (RIEKREGRKEEKN) shows a compositional bias: basic and acidic residues. The span at 470–485 (RFKKKTKVSVKKQFSK) shows a compositional bias: basic residues.

This sequence belongs to the TRAFAC class TrmE-Era-EngA-EngB-Septin-like GTPase superfamily. EngA (Der) GTPase family. Associates with the 50S ribosomal subunit.

Its function is as follows. GTPase that plays an essential role in the late steps of ribosome biogenesis. This Neisseria gonorrhoeae (strain NCCP11945) protein is GTPase Der.